Reading from the N-terminus, the 623-residue chain is Arginine--tRNA ligase (623 aa).

The 'HIGH' region motif lies at 116–126 (ANPIHPLHVGH).

Belongs to the class-I aminoacyl-tRNA synthetase family.

The protein localises to the cytoplasm. It catalyses the reaction tRNA(Arg) + L-arginine + ATP = L-arginyl-tRNA(Arg) + AMP + diphosphate. The sequence is that of Arginine--tRNA ligase from Sulfurisphaera tokodaii (strain DSM 16993 / JCM 10545 / NBRC 100140 / 7) (Sulfolobus tokodaii).